Here is a 226-residue protein sequence, read N- to C-terminus: Apoptosis regulator OPG045 (226 aa).

This sequence belongs to the orthopoxvirus OPG045 family. As to quaternary structure, homodimer. Interacts with host pro-apoptotic protein BCL2L11 (via BH3 domain). Interacts with host NLRP1. Interacts with host BAK.

The protein resides in the host mitochondrion outer membrane. It localises to the host cytoplasm. Plays a role in evading host innate immune response by inhibiting host inflammasome activation. Interacts with and inhibits NLR-mediated interleukin-1 beta/IL1B production in infected cells. At the host mitochondria outer membrane, interacts with the BH3 domain of host BAK and prevents BAK from binding active BAX. In turn, host apoptosis is inhibited. The protein is Apoptosis regulator OPG045 (OPG045) of Vaccinia virus (strain Copenhagen) (VACV).